Reading from the N-terminus, the 436-residue chain is Adenylosuccinate synthetase (436 aa).

GTP contacts are provided by residues 12–18 (GDEGKGK) and 40–42 (GHT). The active-site Proton acceptor is Asp13. Mg(2+)-binding residues include Asp13 and Gly40. IMP is bound by residues 13–16 (DEGK), 38–41 (NAGH), Thr128, Arg142, Gln223, Thr238, and Arg302. Residue His41 is the Proton donor of the active site. 298–304 (TTTGRRR) is a substrate binding site. Residues Arg304, 330–332 (KLD), and 412–414 (SLG) each bind GTP.

The protein belongs to the adenylosuccinate synthetase family. In terms of assembly, homodimer. Mg(2+) is required as a cofactor.

The protein resides in the cytoplasm. The enzyme catalyses IMP + L-aspartate + GTP = N(6)-(1,2-dicarboxyethyl)-AMP + GDP + phosphate + 2 H(+). It participates in purine metabolism; AMP biosynthesis via de novo pathway; AMP from IMP: step 1/2. In terms of biological role, plays an important role in the de novo pathway of purine nucleotide biosynthesis. Catalyzes the first committed step in the biosynthesis of AMP from IMP. This chain is Adenylosuccinate synthetase, found in Prochlorococcus marinus (strain MIT 9301).